We begin with the raw amino-acid sequence, 78 residues long: Large ribosomal subunit protein bL28 (78 aa).

The tract at residues 1 to 21 (MSRVCQVTGKRPVSGNNRSHA) is disordered.

The protein belongs to the bacterial ribosomal protein bL28 family.

The sequence is that of Large ribosomal subunit protein bL28 from Serratia proteamaculans (strain 568).